Reading from the N-terminus, the 298-residue chain is Lipoyl synthase (298 aa).

Residues Cys40, Cys45, Cys51, Cys67, Cys71, Cys74, and Ser280 each contribute to the [4Fe-4S] cluster site. The Radical SAM core domain maps to 53–269 (AVRKTATFMI…KEIALSKGFS (217 aa)).

Belongs to the radical SAM superfamily. Lipoyl synthase family. It depends on [4Fe-4S] cluster as a cofactor.

The protein localises to the cytoplasm. It catalyses the reaction [[Fe-S] cluster scaffold protein carrying a second [4Fe-4S](2+) cluster] + N(6)-octanoyl-L-lysyl-[protein] + 2 oxidized [2Fe-2S]-[ferredoxin] + 2 S-adenosyl-L-methionine + 4 H(+) = [[Fe-S] cluster scaffold protein] + N(6)-[(R)-dihydrolipoyl]-L-lysyl-[protein] + 4 Fe(3+) + 2 hydrogen sulfide + 2 5'-deoxyadenosine + 2 L-methionine + 2 reduced [2Fe-2S]-[ferredoxin]. Its pathway is protein modification; protein lipoylation via endogenous pathway; protein N(6)-(lipoyl)lysine from octanoyl-[acyl-carrier-protein]. In terms of biological role, catalyzes the radical-mediated insertion of two sulfur atoms into the C-6 and C-8 positions of the octanoyl moiety bound to the lipoyl domains of lipoate-dependent enzymes, thereby converting the octanoylated domains into lipoylated derivatives. The protein is Lipoyl synthase of Bacillus mycoides (strain KBAB4) (Bacillus weihenstephanensis).